The chain runs to 67 residues: Large ribosomal subunit protein uL29 (67 aa).

It belongs to the universal ribosomal protein uL29 family.

The chain is Large ribosomal subunit protein uL29 from Alkaliphilus oremlandii (strain OhILAs) (Clostridium oremlandii (strain OhILAs)).